Reading from the N-terminus, the 186-residue chain is Large ribosomal subunit protein uL10 (186 aa).

The protein belongs to the universal ribosomal protein uL10 family. In terms of assembly, part of the ribosomal stalk of the 50S ribosomal subunit. The N-terminus interacts with L11 and the large rRNA to form the base of the stalk. The C-terminus forms an elongated spine to which L12 dimers bind in a sequential fashion forming a multimeric L10(L12)X complex.

In terms of biological role, forms part of the ribosomal stalk, playing a central role in the interaction of the ribosome with GTP-bound translation factors. This is Large ribosomal subunit protein uL10 from Rhodococcus jostii (strain RHA1).